Reading from the N-terminus, the 331-residue chain is DNA-directed RNA polymerase subunit alpha (331 aa).

The segment at 1 to 233 (MVREEIAVST…DLFLPFLHAE (233 aa)) is alpha N-terminal domain (alpha-NTD). The alpha C-terminal domain (alpha-CTD) stretch occupies residues 268–331 (ALKRVFIDQS…GILQKRFAID (64 aa)).

This sequence belongs to the RNA polymerase alpha chain family. In terms of assembly, in plastids the minimal PEP RNA polymerase catalytic core is composed of four subunits: alpha, beta, beta', and beta''. When a (nuclear-encoded) sigma factor is associated with the core the holoenzyme is formed, which can initiate transcription.

The protein resides in the plastid. It localises to the chloroplast. The enzyme catalyses RNA(n) + a ribonucleoside 5'-triphosphate = RNA(n+1) + diphosphate. Its function is as follows. DNA-dependent RNA polymerase catalyzes the transcription of DNA into RNA using the four ribonucleoside triphosphates as substrates. In Illicium oligandrum (Star anise), this protein is DNA-directed RNA polymerase subunit alpha.